Consider the following 176-residue polypeptide: Ribosome maturation factor RimM (176 aa).

The PRC barrel domain occupies 99–173 (ADEYYWHDLL…TMTITPLEGL (75 aa)).

The protein belongs to the RimM family. Binds ribosomal protein uS19.

The protein resides in the cytoplasm. In terms of biological role, an accessory protein needed during the final step in the assembly of 30S ribosomal subunit, possibly for assembly of the head region. Essential for efficient processing of 16S rRNA. May be needed both before and after RbfA during the maturation of 16S rRNA. It has affinity for free ribosomal 30S subunits but not for 70S ribosomes. The protein is Ribosome maturation factor RimM of Trichlorobacter lovleyi (strain ATCC BAA-1151 / DSM 17278 / SZ) (Geobacter lovleyi).